The chain runs to 48 residues: MPQLVPFYFTNQIFYGFASLSVIVYLFSIYILPHYLEIYVTRIFITKT.

Met-1 carries the post-translational modification N-formylmethionine. The Mitochondrial intermembrane portion of the chain corresponds to 1 to 12 (MPQLVPFYFTNQ). Residues 13–32 (IFYGFASLSVIVYLFSIYIL) traverse the membrane as a helical segment. Topologically, residues 33-48 (PHYLEIYVTRIFITKT) are mitochondrial matrix.

F-type ATP synthases have 2 components, the catalytic core F(1) and the membrane-embedded component F(0), linked together by a central stalk and a peripheral stalk. The central stalk, also called rotor shaft, is often seen as part of F(1). The peripheral stalk is seen as part of F(0). F(0) contains the membrane channel next to the rotor. F-type ATP synthases form dimers but each monomer functions independently in ATP generation. The dimer consists of 17 different polypeptides: ATP1 (subunit alpha, 3 molecules per monomer, part of F(1)), ATP2 (subunit beta, 3 copies per monomer, part of F(1)), ATP3 (subunit gamma, part of the central stalk), ATP4 (subunit b, part of the peripheral stalk), ATP5/OSCP (subunit 5/OSCP, part of the peripheral stalk), ATP6 (subunit a, part of the peripheral stalk), ATP7 (subunit d, part of the peripheral stalk), ATP8 (subunit 8, part of the peripheral stalk), OLI1 (subunit c, part of the rotor, 10 molecules per monomer), ATP14 (subunit h, part of the peripheral stalk), ATP15 (subunit epsilon, part of the central stalk), ATP16 (subunit delta, part of the central stalk), ATP17 (subunit f, part of the peripheral stalk), ATP18 (subunit i/j, part of the peripheral stalk), ATP19 (subunit k, dimer-specific, at interface between monomers), ATP20 (subunit g, at interface between monomers), TIM11 (subunit e, at interface between monomers).

It localises to the mitochondrion inner membrane. Mitochondrial membrane ATP synthase (F(1)F(0) ATP synthase or Complex V) produces ATP from ADP in the presence of a proton gradient across the membrane which is generated by electron transport complexes of the respiratory chain. F-type ATP synthases consist of two structural domains, F(1) - containing the extramembraneous catalytic core, and F(0) - containing the membrane proton channel, linked together by a central stalk and a peripheral stalk. During catalysis, ATP synthesis in the catalytic domain of F(1) is coupled via a rotary mechanism of the central stalk subunits to proton translocation. Part of the complex F(0) domain. Minor subunit located with subunit a/ATP6 in the membrane. The protein is ATP synthase protein 8 of Yarrowia lipolytica (strain CLIB 122 / E 150) (Yeast).